The chain runs to 282 residues: Deoxyribonuclease-1 (282 aa).

Positions 1–22 (MRGARLTGALLALAGLLQVALS) are cleaved as a signal peptide. N-linked (GlcNAc...) asparagine glycosylation occurs at Asn40. Glu100 is a catalytic residue. Residues Cys123 and Cys126 are joined by a disulfide bond. N-linked (GlcNAc...) asparagine glycosylation occurs at Asn128. Residue His156 is part of the active site. Cys195 and Cys231 form a disulfide bridge.

It belongs to the DNase I family. It depends on Ca(2+) as a cofactor. Mg(2+) serves as cofactor.

Its subcellular location is the secreted. It localises to the zymogen granule. The protein localises to the nucleus envelope. The catalysed reaction is Endonucleolytic cleavage to 5'-phosphodinucleotide and 5'-phosphooligonucleotide end-products.. Its function is as follows. Serum endocuclease secreted into body fluids by a wide variety of exocrine and endocrine organs. Expressed by non-hematopoietic tissues and preferentially cleaves protein-free DNA. Among other functions, seems to be involved in cell death by apoptosis. Binds specifically to G-actin and blocks actin polymerization. Together with DNASE1L3, plays a key role in degrading neutrophil extracellular traps (NETs). NETs are mainly composed of DNA fibers and are released by neutrophils to bind pathogens during inflammation. Degradation of intravascular NETs by DNASE1 and DNASE1L3 is required to prevent formation of clots that obstruct blood vessels and cause organ damage following inflammation. This is Deoxyribonuclease-1 (DNASE1) from Equus caballus (Horse).